The primary structure comprises 358 residues: Isopentenyl-diphosphate delta-isomerase (358 aa).

Position 12 to 13 (12 to 13) interacts with substrate; sequence RK. Residues 69-71, S99, and N128 each bind FMN; that span reads AMT. Q158 provides a ligand contact to substrate. Position 159 (E159) interacts with Mg(2+). FMN contacts are provided by residues K190, T220, 267–269, and 288–289; these read GIR and AG.

Belongs to the IPP isomerase type 2 family. As to quaternary structure, homooctamer. Dimer of tetramers. It depends on FMN as a cofactor. NADPH is required as a cofactor. Requires Mg(2+) as cofactor.

It localises to the cytoplasm. It catalyses the reaction isopentenyl diphosphate = dimethylallyl diphosphate. Functionally, involved in the biosynthesis of isoprenoids. Catalyzes the 1,3-allylic rearrangement of the homoallylic substrate isopentenyl (IPP) to its allylic isomer, dimethylallyl diphosphate (DMAPP). This chain is Isopentenyl-diphosphate delta-isomerase, found in Listeria monocytogenes serotype 4a (strain HCC23).